Here is a 62-residue protein sequence, read N- to C-terminus: MKANDFRKMAEAELKQKRDELTQELFNLKFQLNTGRLENTGKLGAIRKDIARINTILTESRG.

It belongs to the universal ribosomal protein uL29 family.

The protein is Large ribosomal subunit protein uL29 of Trichlorobacter lovleyi (strain ATCC BAA-1151 / DSM 17278 / SZ) (Geobacter lovleyi).